The chain runs to 229 residues: Isopentenyl-diphosphate delta-isomerase (229 aa).

Substrate is bound at residue Lys-39. Positions 43 and 54 each coordinate Mg(2+). The 151-residue stretch at 52–202 (LLHRAFSMFI…QYGFTPWFKL (151 aa)) folds into the Nudix hydrolase domain. Substrate-binding residues include Gln-72 and Lys-77. Cys-89 is a catalytic residue. Substrate is bound at residue Ser-90. The Mg(2+) site is built by Glu-152 and Glu-154. The active site involves Glu-154.

This sequence belongs to the IPP isomerase type 1 family. Mg(2+) is required as a cofactor.

It localises to the cytoplasm. Its subcellular location is the nucleus. The enzyme catalyses isopentenyl diphosphate = dimethylallyl diphosphate. It participates in isoprenoid biosynthesis; dimethylallyl diphosphate biosynthesis; dimethylallyl diphosphate from isopentenyl diphosphate: step 1/1. In terms of biological role, isopentenyl-diphosphate delta-isomerase; part of the second module of ergosterol biosynthesis pathway that includes the middle steps of the pathway. Idi1 catalyzes the 1,3-allylic rearrangement of isopentenyl (IPP) to its highly electrophilic allylic isomer, dimethylallyl diphosphate (DMAPP). The second module is carried out in the vacuole and involves the formation of farnesyl diphosphate, which is also an important intermediate in the biosynthesis of ubiquinone, dolichol, heme and prenylated proteins. Activity by the mevalonate kinase erg12 first converts mevalonate into 5-phosphomevalonate. 5-phosphomevalonate is then further converted to 5-diphosphomevalonate by the phosphomevalonate kinase erg8. The diphosphomevalonate decarboxylase mvd1 then produces isopentenyl diphosphate. The isopentenyl-diphosphate delta-isomerase idi1 then catalyzes the 1,3-allylic rearrangement of the homoallylic substrate isopentenyl (IPP) to its highly electrophilic allylic isomer, dimethylallyl diphosphate (DMAPP). Finally the farnesyl diphosphate synthase fps1 catalyzes the sequential condensation of isopentenyl pyrophosphate with dimethylallyl pyrophosphate, and then with the resultant geranylpyrophosphate to the ultimate product farnesyl pyrophosphate. This Schizosaccharomyces pombe (strain 972 / ATCC 24843) (Fission yeast) protein is Isopentenyl-diphosphate delta-isomerase.